A 256-amino-acid chain; its full sequence is Flap endonuclease Xni (256 aa).

Asp105 lines the Mg(2+) pocket. Residues 164–250 (SQFIDFLAMA…LNTRLANFRV (87 aa)) enclose the 5'-3' exonuclease domain. K(+)-binding residues include Met172, Ala173, Pro181, Ile183, and Ile186. Residues 185–190 (GIGPKS) form an interaction with DNA region.

It belongs to the Xni family. It depends on Mg(2+) as a cofactor. Requires K(+) as cofactor.

In terms of biological role, has flap endonuclease activity. During DNA replication, flap endonucleases cleave the 5'-overhanging flap structure that is generated by displacement synthesis when DNA polymerase encounters the 5'-end of a downstream Okazaki fragment. In Shewanella loihica (strain ATCC BAA-1088 / PV-4), this protein is Flap endonuclease Xni.